A 239-amino-acid polypeptide reads, in one-letter code: Phosphoribosylaminoimidazole-succinocarboxamide synthase (239 aa).

It belongs to the SAICAR synthetase family.

The catalysed reaction is 5-amino-1-(5-phospho-D-ribosyl)imidazole-4-carboxylate + L-aspartate + ATP = (2S)-2-[5-amino-1-(5-phospho-beta-D-ribosyl)imidazole-4-carboxamido]succinate + ADP + phosphate + 2 H(+). Its pathway is purine metabolism; IMP biosynthesis via de novo pathway; 5-amino-1-(5-phospho-D-ribosyl)imidazole-4-carboxamide from 5-amino-1-(5-phospho-D-ribosyl)imidazole-4-carboxylate: step 1/2. This Brevibacillus brevis (strain 47 / JCM 6285 / NBRC 100599) protein is Phosphoribosylaminoimidazole-succinocarboxamide synthase.